The primary structure comprises 726 residues: MDTFITRNFQTTIIQKAKNTMAEFSEDPELQPAMLFNICVHLEVCYVISDMNFLDEEGKTYTALEGQGKEQNLRPQYEVIEGMPRNIAWMVQRSLAQEHGIETPRYLADLFDYKTKRFIEVGITKGLADDYFWKKKEKLGNSMELMIFSYNQDYSLSNESSLDEEGKGRVLSRLTELQAELSLKNLWQVLIGEEDIEKGIDFKLGQTISKLRDISVPAGFSNFEGMRSYIDNIDPKGAIERNLARMSPLVSVTPKKLKWEDLRPIGPHIYNHELPEVPYNAFLLMSDELGLANMTEGKSKKPKTLAKECLEKYSTLRDQTDPILIMKSEKANENFLWKLWRDCVNTISNEETSNELQKTNYAKWATGDGLTYQKIMKEVAIDDETMYQEEPKIPNKCRVAAWVQTEMNLLSTLTSKRALDLPEIGPDVAPMEHVGSERRKYFVNEINYCKASTVMMKYVLFHTSLLNESNASMGKYKVIPITNRVVNEKGESFDMLHGLAVKGQSHLRGDTDVVTVVTFEFSSTDPRVDSGKWPKYTVFRIGSLFVSGREKSVYLYCRVNGTNKIQMKWGMEARRCLLQSMQQMEAIVEQESSIQGYDMTKACFKGDRVNSPKTFSIGTQEGKLVKGSFGKALRVIFTKCLMHYVFGNAQLEGFSAESRRLLLLIQALKDRKGPWVFDLEGMYSGIEECISNNPWVIQSAYWFNEWLGFEKEGSKVLESIDEIMDE.

Residues H41, E81, D109, E120, and V121 each coordinate Mn(2+). A Nuclear localization signal 1 (NLS1) motif is present at residues 125-140 (KGLADDYFWKKKEKLG). Residues 183–244 (LKNLWQVLIG…PKGAIERNLA (62 aa)) carry the Nuclear localization signal 2 (NLS2) motif.

The protein belongs to the influenza viruses PA family. As to quaternary structure, influenza RNA polymerase is composed of three subunits: PB1, PB2 and PA. Interacts (via C-terminus) with PB1 (via N-terminus). Mn(2+) serves as cofactor. Post-translationally, phosphorylated on serines and threonines by host kinases, including human casein kinase II.

Its subcellular location is the host cytoplasm. It localises to the host nucleus. Functionally, plays an essential role in viral RNA transcription and replication by forming the heterotrimeric polymerase complex together with PB1 and PB2 subunits. The complex transcribes viral mRNAs by using a unique mechanism called cap-snatching. It consists in the hijacking and cleavage of host capped pre-mRNAs. These short capped RNAs are then used as primers for viral mRNAs. The PB2 subunit is responsible for the binding of the 5' cap of cellular pre-mRNAs which are subsequently cleaved after 10-13 nucleotides by the PA subunit that carries the endonuclease activity. The protein is Polymerase acidic protein of Homo sapiens (Human).